The chain runs to 449 residues: Glucose-6-phosphate isomerase (449 aa).

Glutamate 291 functions as the Proton donor in the catalytic mechanism. Catalysis depends on residues histidine 312 and lysine 426.

Belongs to the GPI family.

The protein localises to the cytoplasm. It catalyses the reaction alpha-D-glucose 6-phosphate = beta-D-fructose 6-phosphate. Its pathway is carbohydrate biosynthesis; gluconeogenesis. It participates in carbohydrate degradation; glycolysis; D-glyceraldehyde 3-phosphate and glycerone phosphate from D-glucose: step 2/4. Catalyzes the reversible isomerization of glucose-6-phosphate to fructose-6-phosphate. The sequence is that of Glucose-6-phosphate isomerase from Pediococcus pentosaceus (strain ATCC 25745 / CCUG 21536 / LMG 10740 / 183-1w).